We begin with the raw amino-acid sequence, 393 residues long: Phosphoglycerate kinase (393 aa).

Residues 21–23 (DLN), R37, 60–63 (HLGR), R115, and R148 each bind substrate. ATP contacts are provided by residues K199, E321, and 347–350 (GGDT).

The protein belongs to the phosphoglycerate kinase family. In terms of assembly, monomer.

Its subcellular location is the cytoplasm. It carries out the reaction (2R)-3-phosphoglycerate + ATP = (2R)-3-phospho-glyceroyl phosphate + ADP. It participates in carbohydrate degradation; glycolysis; pyruvate from D-glyceraldehyde 3-phosphate: step 2/5. The polypeptide is Phosphoglycerate kinase (Dechloromonas aromatica (strain RCB)).